A 310-amino-acid chain; its full sequence is Vomeronasal type-1 receptor 44 (310 aa).

Residues 1–20 are Extracellular-facing; it reads MNKANLLHIDTNIKITLLAE. Residues 21–41 traverse the membrane as a helical segment; it reads VSVGISANSILFIAYLCMLLG. Topologically, residues 42 to 50 are cytoplasmic; sequence ENRHKPIDL. Residues 51–71 form a helical membrane-spanning segment; it reads YIAFLSLTQLMLLITMGLIAV. At 72 to 93 the chain is on the extracellular side; it reads DMFMPWGRWDSTTCQSLIYLHR. An intrachain disulfide couples Cys-85 to Cys-172. The helical transmembrane segment at 94 to 114 threads the bilayer; it reads FLRGLTLCATCLLNVLWTITL. Residues 115-131 lie on the Cytoplasmic side of the membrane; that stretch reads SSRNSCLAKFKHKYPHH. A helical transmembrane segment spans residues 132 to 152; the sequence is ISGAFLFLCVLYMSFSSHFLV. Over 153-190 the chain is Extracellular; the sequence is SMTVTPNLTSENFMYVTQSCSLLPMSYSRTSMFSTPVA. Asn-159 is a glycosylation site (N-linked (GlcNAc...) asparagine). Residues 191-211 traverse the membrane as a helical segment; sequence IRETFLISLMALSSGYMVALL. The Cytoplasmic portion of the chain corresponds to 212 to 238; it reads WRHKKQAQHLRSTSLSSKASPEQRATR. A helical membrane pass occupies residues 239 to 259; sequence TILLLMSFFVVFYILDTVIFH. Residues 260-268 are Extracellular-facing; it reads SRMKFKDGS. Residues 269-289 traverse the membrane as a helical segment; that stretch reads ILYCFQIIVSHSYVTVSPFVF. Residues 290-310 lie on the Cytoplasmic side of the membrane; the sequence is ICTEKHIIKFLRSMCGRIANI.

Belongs to the G-protein coupled receptor 1 family.

It localises to the cell membrane. Functionally, putative pheromone receptor implicated in the regulation of social and reproductive behavior. The polypeptide is Vomeronasal type-1 receptor 44 (Vmn1r44) (Mus musculus (Mouse)).